The chain runs to 302 residues: Ribonucleoside-diphosphate reductase small subunit (302 aa).

Fe cation contacts are provided by Glu61, Glu91, and His94. Tyr98 is an active-site residue. A helical transmembrane segment spans residues 147-167 (ILVFLLIEGIFFISSFYSIAL). Residues Glu154, Glu188, and His191 each contribute to the Fe cation site.

This sequence belongs to the ribonucleoside diphosphate reductase small chain family. In terms of assembly, heterotetramer composed of a homodimer of the large subunit (R1) and a homodimer of the small subunit (R2). Larger multisubunit protein complex are also active, composed of (R1)n(R2)n. Requires Fe cation as cofactor.

Its subcellular location is the host membrane. It carries out the reaction a 2'-deoxyribonucleoside 5'-diphosphate + [thioredoxin]-disulfide + H2O = a ribonucleoside 5'-diphosphate + [thioredoxin]-dithiol. Ribonucleoside-diphosphate reductase holoenzyme provides the precursors necessary for viral DNA synthesis. Allows virus growth in non-dividing cells, as well as reactivation from latency in infected hosts. Catalyzes the biosynthesis of deoxyribonucleotides from the corresponding ribonucleotides. The polypeptide is Ribonucleoside-diphosphate reductase small subunit (Homo sapiens (Human)).